The primary structure comprises 101 residues: Putative septation protein SpoVG (101 aa).

It belongs to the SpoVG family.

In terms of biological role, could be involved in septation. This Staphylococcus saprophyticus subsp. saprophyticus (strain ATCC 15305 / DSM 20229 / NCIMB 8711 / NCTC 7292 / S-41) protein is Putative septation protein SpoVG.